The primary structure comprises 294 residues: Metallophosphoesterase MPPED2 (294 aa).

Mn(2+) contacts are provided by aspartate 65, histidine 67, aspartate 86, asparagine 117, and histidine 213. 117-118 contributes to the GMP binding site; sequence NH. GMP contacts are provided by residues 225–226 and 254–255; these read KE and HE. A Mn(2+)-binding site is contributed by histidine 254.

This sequence belongs to the UPF0046 family. As to quaternary structure, homodimer. Mn(2+) is required as a cofactor. Co(2+) serves as cofactor. As to expression, expressed in fetal brain (at protein level). detected in fetal and adult brain.

Inhibited by nmolar levels of AMP and GMP. In terms of biological role, displays low metallophosphoesterase activity (in vitro). May play a role in the development of the nervous system. The chain is Metallophosphoesterase MPPED2 (Mpped2) from Rattus norvegicus (Rat).